Reading from the N-terminus, the 94-residue chain is Integration host factor subunit beta (94 aa).

The protein belongs to the bacterial histone-like protein family. Heterodimer of an alpha and a beta chain.

In terms of biological role, this protein is one of the two subunits of integration host factor, a specific DNA-binding protein that functions in genetic recombination as well as in transcriptional and translational control. This is Integration host factor subunit beta from Haemophilus influenzae (strain 86-028NP).